The sequence spans 250 residues: MLRILLSNDDGITAPGIQTLAAALREFAQVQIVAPDRNRSGSSNALTLDSALRITTLSNGDIAVQQGTPTDCVYLGVNALMRPRPDIVVSGINAGPNLGDDVIYSGTVAAAMEGRHLGFPALAVSLNGQQHYATAAAVTCRILRALQHKPLRTGKILNINIPDLPLSEIKGIRVTRCGSRHPAEQVFCQQDPRGQDLYWIGPPGEKFDVAEDTDFAAVEQGYVSITPLQVDLTAYGAQDVVENWLASMAD.

Positions 9, 10, 40, and 93 each coordinate a divalent metal cation.

Belongs to the SurE nucleotidase family. A divalent metal cation is required as a cofactor.

The protein resides in the cytoplasm. It carries out the reaction a ribonucleoside 5'-phosphate + H2O = a ribonucleoside + phosphate. The enzyme catalyses a ribonucleoside 3'-phosphate + H2O = a ribonucleoside + phosphate. It catalyses the reaction [phosphate](n) + H2O = [phosphate](n-1) + phosphate + H(+). Its function is as follows. Nucleotidase with a broad substrate specificity as it can dephosphorylate various ribo- and deoxyribonucleoside 5'-monophosphates and ribonucleoside 3'-monophosphates with highest affinity to 3'-AMP. Also hydrolyzes polyphosphate (exopolyphosphatase activity) with the preference for short-chain-length substrates (P20-25). Might be involved in the regulation of dNTP and NTP pools, and in the turnover of 3'-mononucleotides produced by numerous intracellular RNases (T1, T2, and F) during the degradation of various RNAs. The chain is 5'/3'-nucleotidase SurE from Yersinia enterocolitica serotype O:8 / biotype 1B (strain NCTC 13174 / 8081).